We begin with the raw amino-acid sequence, 83 residues long: MSKVCDITGKRPRVGNKVSHANNKTKRRFYPNLQFKKFYVPETNSWIVLRVSTSVIRTINKKGILEVIKEAQRKGTISQLIVG.

It belongs to the bacterial ribosomal protein bL28 family.

The polypeptide is Large ribosomal subunit protein bL28 (Amoebophilus asiaticus (strain 5a2)).